A 284-amino-acid chain; its full sequence is RAD52 motif-containing protein 1 (284 aa).

Positions 1 to 92 (MAELVPFAVP…KQLFQKSPVK (92 aa)) are necessary for nuclear localization and for nucleolar accumulation in response to heat shock. The region spanning 15–98 (KTLLVWELSS…SPVKVRLGTR (84 aa)) is the RRM domain. The segment at 90-133 (PVKVRLGTRHKAVQHQALALNSSRCQELANYYFGFNGWSKRIIK) is necessary for nuclear and nucleolar localization.

In terms of assembly, homodimer.

The protein localises to the nucleus. The protein resides in the cytoplasm. It is found in the nucleolus. Its subcellular location is the cajal body. It localises to the PML body. In terms of biological role, may confer resistance to the antitumor agent cisplatin. Binds to DNA and RNA. The sequence is that of RAD52 motif-containing protein 1 (RDM1) from Macaca fascicularis (Crab-eating macaque).